The following is a 187-amino-acid chain: Peptidyl-tRNA hydrolase (187 aa).

Y14 contacts tRNA. The active-site Proton acceptor is H19. TRNA-binding residues include Y63 and N65.

The protein belongs to the PTH family. In terms of assembly, monomer.

The protein resides in the cytoplasm. The catalysed reaction is an N-acyl-L-alpha-aminoacyl-tRNA + H2O = an N-acyl-L-amino acid + a tRNA + H(+). In terms of biological role, hydrolyzes ribosome-free peptidyl-tRNAs (with 1 or more amino acids incorporated), which drop off the ribosome during protein synthesis, or as a result of ribosome stalling. Functionally, catalyzes the release of premature peptidyl moieties from peptidyl-tRNA molecules trapped in stalled 50S ribosomal subunits, and thus maintains levels of free tRNAs and 50S ribosomes. The chain is Peptidyl-tRNA hydrolase from Thermodesulfovibrio yellowstonii (strain ATCC 51303 / DSM 11347 / YP87).